A 190-amino-acid polypeptide reads, in one-letter code: Probable nicotinate-nucleotide adenylyltransferase (190 aa).

This sequence belongs to the NadD family.

It catalyses the reaction nicotinate beta-D-ribonucleotide + ATP + H(+) = deamido-NAD(+) + diphosphate. The protein operates within cofactor biosynthesis; NAD(+) biosynthesis; deamido-NAD(+) from nicotinate D-ribonucleotide: step 1/1. Catalyzes the reversible adenylation of nicotinate mononucleotide (NaMN) to nicotinic acid adenine dinucleotide (NaAD). This Azobacteroides pseudotrichonymphae genomovar. CFP2 protein is Probable nicotinate-nucleotide adenylyltransferase.